The following is a 769-amino-acid chain: Serine protease HtrA-like (769 aa).

Residues 1-20 show a composition bias toward basic residues; that stretch reads MDIGKKHVIPKSQYRRKRRE. The segment at 1 to 390 is disordered; it reads MDIGKKHVIP…ATSKLNKGRA (390 aa). Basic and acidic residues-rich tracts occupy residues 21-64 and 71-108; these read FFHN…ERFK and LEQR…DVSK. Polar residues predominate over residues 126-137; the sequence is YEQNSEATLSTK. The span at 138 to 186 shows a compositional bias: basic and acidic residues; sequence STDKVESTEMRKLSSDKNKVGHEEQHVLSKPSEHDKETRIDSESSRTDS. Positions 247–262 are enriched in polar residues; that stretch reads QQSQNEQTKTYTYGDS. 2 stretches are compositionally biased toward basic and acidic residues: residues 264–296 and 310–330; these read QNDK…HIVD and KTDD…HKQN. Polar residues predominate over residues 331-347; that stretch reads ADSSETVGYQSQSTASH. Residues 348–364 are compositionally biased toward basic and acidic residues; it reads RSTEKRNISINDHDKLN. The segment covering 365–390 has biased composition (polar residues); the sequence is GQKTNTKTSANNNQKKATSKLNKGRA. A helical transmembrane segment spans residues 410-430; the sequence is LVILMGIIILIVILNAIFNNV. Active-site charge relay system residues include His-504, Asp-534, and Ser-619. One can recognise a PDZ domain in the interval 680–733; sequence IASLNSFERQAVKLPGKVKNGVVVDQVDNNGLADQSGLKKGDVITELDGKLLED.

It belongs to the peptidase S1C family.

The protein resides in the cell membrane. The polypeptide is Serine protease HtrA-like (Staphylococcus aureus (strain COL)).